Reading from the N-terminus, the 101-residue chain is Large ribosomal subunit protein bL28 (101 aa).

Belongs to the bacterial ribosomal protein bL28 family.

The protein is Large ribosomal subunit protein bL28 of Rhodopseudomonas palustris (strain BisB5).